Here is a 60-residue protein sequence, read N- to C-terminus: DNA gyrase inhibitor YacG (60 aa).

Positions 3, 6, 18, and 22 each coordinate Zn(2+). A disordered region spans residues 38–60 (PASSEDEEEPLDQEAETPVAPRH). Over residues 41-52 (SEDEEEPLDQEA) the composition is skewed to acidic residues.

It belongs to the DNA gyrase inhibitor YacG family. In terms of assembly, interacts with GyrB. Requires Zn(2+) as cofactor.

Its function is as follows. Inhibits all the catalytic activities of DNA gyrase by preventing its interaction with DNA. Acts by binding directly to the C-terminal domain of GyrB, which probably disrupts DNA binding by the gyrase. This Ruegeria pomeroyi (strain ATCC 700808 / DSM 15171 / DSS-3) (Silicibacter pomeroyi) protein is DNA gyrase inhibitor YacG.